Reading from the N-terminus, the 238-residue chain is MLIIPAVDMKNKKCVQLIQGNPDKKHVELDNPPEIAKKWVEQGAEMLHLVDLDGAINGKRVNDEFIEEIIKNSGVPVQIGGGIRSVSDALYFIEKGAEKVILGTVAIQNPKIVREISSIVGKEKVTVALDAKDGKVLIKGWTEKTDYSPVQIGKILENMGAGSILFTNVDSEGLLEGINVLPTKELVDNLNIPIIASGGVTTVEDLLKFKEIGVYAVVVGSALYKDMINLKDAILASK.

Residue D8 is the Proton acceptor of the active site. The active-site Proton donor is the D130.

This sequence belongs to the HisA/HisF family.

Its subcellular location is the cytoplasm. The enzyme catalyses 1-(5-phospho-beta-D-ribosyl)-5-[(5-phospho-beta-D-ribosylamino)methylideneamino]imidazole-4-carboxamide = 5-[(5-phospho-1-deoxy-D-ribulos-1-ylimino)methylamino]-1-(5-phospho-beta-D-ribosyl)imidazole-4-carboxamide. Its pathway is amino-acid biosynthesis; L-histidine biosynthesis; L-histidine from 5-phospho-alpha-D-ribose 1-diphosphate: step 4/9. The chain is 1-(5-phosphoribosyl)-5-[(5-phosphoribosylamino)methylideneamino] imidazole-4-carboxamide isomerase from Methanococcus vannielii (strain ATCC 35089 / DSM 1224 / JCM 13029 / OCM 148 / SB).